The chain runs to 495 residues: Leucine aminopeptidase 2 (495 aa).

A signal peptide spans 1 to 21 (MKTQLLSLGVALTAISQGVIA). Residues 124 to 218 (PPADKITAEL…ADGKNLASLV (95 aa)) form the PA domain. N142 and N235 each carry an N-linked (GlcNAc...) asparagine glycan. Zn(2+)-binding residues include H259 and D271. N272 is a glycosylation site (N-linked (GlcNAc...) asparagine). E303 functions as the Proton acceptor in the catalytic mechanism. Positions 304 and 332 each coordinate Zn(2+). N-linked (GlcNAc...) asparagine glycosylation occurs at N352. Residue H430 coordinates Zn(2+). Positions 464 to 495 (GFPTRPKTGKRDVSPRGQSMPGGGCGHHSVFM) are disordered.

This sequence belongs to the peptidase M28 family. M28A subfamily. Monomer. Requires Zn(2+) as cofactor.

It localises to the secreted. Functionally, extracellular aminopeptidase that releases a wide variety of amino acids from natural peptides and contributes to pathogenicity. The sequence is that of Leucine aminopeptidase 2 (LAP2) from Arthroderma otae (strain ATCC MYA-4605 / CBS 113480) (Microsporum canis).